Here is a 730-residue protein sequence, read N- to C-terminus: Cyclin-dependent kinase 12 (730 aa).

Disordered regions lie at residues 1 to 230 and 246 to 283; these read MEIS…APFS and FSLS…IATR. Residues 9–21 are compositionally biased toward basic and acidic residues; that stretch reads THERDRKGSYGHR. Residues 57-67 show a composition bias toward polar residues; sequence SISPQYKQRNW. The span at 75 to 94 shows a compositional bias: basic and acidic residues; that stretch reads GRDRGRNDFSYRKKGKDYNK. Basic residues-rich tracts occupy residues 95-122 and 151-163; these read RRDK…KRRN and KSKK…RKHS. Low complexity predominate over residues 194–203; it reads FNINPFQPMF. Residues 204–230 show a composition bias toward pro residues; the sequence is SQPPPPPLPPNSQFMTPPPRPPPAPFS. The region spanning 313–605 is the Protein kinase domain; sequence MLDQIGEGTY…AKEALNHPWI (293 aa). ATP contacts are provided by residues 317-325, Lys340, and 398-403; these read IGEGTYGQV and EYVDHD. The active-site Proton acceptor is the Asp444. Residues 623-730 are disordered; it reads DCHEMWSKKQ…QSQYQSVFFK (108 aa). His625 contacts ATP. Residues 676–688 show a composition bias toward basic residues; sequence NHHHHHHHSHHHA. The span at 714 to 730 shows a compositional bias: polar residues; sequence NNHQPVPQSQYQSVFFK.

Belongs to the protein kinase superfamily. CMGC Ser/Thr protein kinase family. CDC2/CDKX subfamily.

It localises to the nucleus. It catalyses the reaction [DNA-directed RNA polymerase] + ATP = phospho-[DNA-directed RNA polymerase] + ADP + H(+). It carries out the reaction L-seryl-[protein] + ATP = O-phospho-L-seryl-[protein] + ADP + H(+). The enzyme catalyses L-threonyl-[protein] + ATP = O-phospho-L-threonyl-[protein] + ADP + H(+). Cyclin-dependent kinase which displays CTD kinase activity: hyperphosphorylates 'Ser-2' in the C-terminal heptapeptide repeat domain (CTD) of the largest RNA polymerase II subunit, thereby acting as a key regulator of transcription elongation. Required for normal reproduction. The chain is Cyclin-dependent kinase 12 from Caenorhabditis elegans.